A 241-amino-acid chain; its full sequence is Corrinoid adenosyltransferase MMAB (241 aa).

A mitochondrion-targeting transit peptide spans Met-1–Phe-26. A disordered region spans residues Gln-27–Arg-69. ATP contacts are provided by residues Thr-54–Ser-63 and Lys-72. The residue at position 128 (Ser-128) is a Phosphoserine. Arg-184–Arg-188 is a binding site for ATP. At Lys-205 the chain carries N6-succinyllysine. Asn-208 contributes to the ATP binding site. Lys-224 carries the post-translational modification N6-acetyllysine; alternate. N6-succinyllysine; alternate is present on Lys-224.

The protein belongs to the Cob(I)alamin adenosyltransferase family. In terms of assembly, homotrimer.

It localises to the mitochondrion. The enzyme catalyses cob(I)alamin-[corrinoid adenosyltransferase] + ATP = apo-[corrinoid adenosyltransferase] + adenosylcob(III)alamin + triphosphate. Converts cob(I)alamin to adenosylcobalamin (adenosylcob(III)alamin), a coenzyme for methylmalonyl-CoA mutase, therefore participates in the final step of the vitamin B12 conversion. Generates adenosylcobalamin (AdoCbl) and directly delivers the cofactor to MUT in a transfer that is stimulated by ATP-binding to MMAB and gated by MMAA. The sequence is that of Corrinoid adenosyltransferase MMAB from Bos taurus (Bovine).